The following is a 384-amino-acid chain: Adaptive-response sensory kinase SasA (384 aa).

Residues 162–384 (MLAHDLRSPL…SFHFTLPVYR (223 aa)) form the Histidine kinase domain. At H165 the chain carries Phosphohistidine; by autocatalysis.

As to quaternary structure, homooligomerizes. Interacts with KaiC. Participates in the KaiABC clock complex, whose core is composed of a KaiC homohexamer, 6 KaiB and up to 6 KaiA dimers. SasA and KaiB(fs) compete to bind to KaiC.

The enzyme catalyses ATP + protein L-histidine = ADP + protein N-phospho-L-histidine.. Its function is as follows. Member of the two-component regulatory system SasA/RpaA involved in genome-wide circadian gene expression. One of several clock output pathways. Participates in the Kai clock protein complex, the main circadian regulator in cyanobacteria, via its interaction with KaiC. KaiC enhances the autophosphorylation activity of SasA, which then transfers its phosphate group to RpaA to activate it. In addition to its output function, recruits fold-shifted KaiB (KaiB(fs)) to KaiC to cooperatively form the KaiB(6):KaiC(6) complex (independent of SasA kinase activity). Required for robustness of the circadian rhythm of gene expression and is involved in clock output, also required for adaptation to light/dark cycles. The polypeptide is Adaptive-response sensory kinase SasA (Microcystis aeruginosa (strain NIES-843 / IAM M-2473)).